The chain runs to 294 residues: Large ribosomal subunit protein uL18A (294 aa).

Ser10 is modified (phosphoserine). Residue Tyr12 is modified to Phosphotyrosine. Residue Ser81 is modified to Phosphoserine.

Belongs to the universal ribosomal protein uL18 family. As to quaternary structure, component of the large ribosomal subunit (LSU). Mature yeast ribosomes consist of a small (40S) and a large (60S) subunit. The 40S small subunit contains 1 molecule of ribosomal RNA (18S rRNA) and 33 different proteins (encoded by 57 genes). The large 60S subunit contains 3 rRNA molecules (25S, 5.8S and 5S rRNA) and 46 different proteins (encoded by 81 genes). Component of a hexameric 5S RNP precursor complex, composed of 5S RNA, rrs1, rpf2, rpl5a/rpl5b, rpl11a/rpl11b and syo1; this complex acts as a precursor for ribosome assembly. rpl5a/rpl5b/uL18 forms a heterotrimeric complex with syo1 and rpl11a/rpl11b/uL5. Interaction of this complex with KAP104 allows the nuclear import of the heterotrimer.

It is found in the cytoplasm. It localises to the nucleus. In terms of biological role, component of the ribosome, a large ribonucleoprotein complex responsible for the synthesis of proteins in the cell. The small ribosomal subunit (SSU) binds messenger RNAs (mRNAs) and translates the encoded message by selecting cognate aminoacyl-transfer RNA (tRNA) molecules. The large subunit (LSU) contains the ribosomal catalytic site termed the peptidyl transferase center (PTC), which catalyzes the formation of peptide bonds, thereby polymerizing the amino acids delivered by tRNAs into a polypeptide chain. The nascent polypeptides leave the ribosome through a tunnel in the LSU and interact with protein factors that function in enzymatic processing, targeting, and the membrane insertion of nascent chains at the exit of the ribosomal tunnel. This is Large ribosomal subunit protein uL18A (rpl501) from Schizosaccharomyces pombe (strain 972 / ATCC 24843) (Fission yeast).